The following is a 379-amino-acid chain: Acetylornithine aminotransferase (379 aa).

Pyridoxal 5'-phosphate is bound by residues 93 to 94 (GA) and F120. Residue R123 participates in N(2)-acetyl-L-ornithine binding. 205–208 (DEVQ) provides a ligand contact to pyridoxal 5'-phosphate. K234 is subject to N6-(pyridoxal phosphate)lysine. S262 serves as a coordination point for N(2)-acetyl-L-ornithine. T263 is a pyridoxal 5'-phosphate binding site.

This sequence belongs to the class-III pyridoxal-phosphate-dependent aminotransferase family. ArgD subfamily. In terms of assembly, homodimer. It depends on pyridoxal 5'-phosphate as a cofactor.

It localises to the cytoplasm. It catalyses the reaction N(2)-acetyl-L-ornithine + 2-oxoglutarate = N-acetyl-L-glutamate 5-semialdehyde + L-glutamate. The protein operates within amino-acid biosynthesis; L-arginine biosynthesis; N(2)-acetyl-L-ornithine from L-glutamate: step 4/4. This is Acetylornithine aminotransferase from Streptococcus mutans serotype c (strain ATCC 700610 / UA159).